We begin with the raw amino-acid sequence, 212 residues long: Ropporin-1 (212 aa).

Residues P12–A43 enclose the RIIa domain. The residue at position 56 (S56) is a Phosphoserine. An interaction with RHPN1 region spans residues V209–E212.

It belongs to the ropporin family. Homodimer. Interacts with AKAP3. May interact with SPA17. Interacts with RHPN1. Interacts with FSCB; the interaction increases upon spermatozoa capacitation conditions. Interacts with CFAP61. In terms of processing, sumoylated, sumoylation decreases upon spermatozoa capacitation conditions.

Its subcellular location is the cell projection. The protein localises to the cilium. It is found in the flagellum. Its function is as follows. Important for male fertility. With ROPN1L, involved in fibrous sheath integrity and sperm motility, plays a role in PKA-dependent signaling processes required for spermatozoa capacitation. The polypeptide is Ropporin-1 (ROPN1) (Bos taurus (Bovine)).